We begin with the raw amino-acid sequence, 85 residues long: Antibacterial factor-related peptide 1 (85 aa).

An N-terminal signal peptide occupies residues 1-19; it reads MLYFCLLLVLLLPNNGVSS.

Expressed in the pharynx and body wall muscle.

It is found in the secreted. The protein is Antibacterial factor-related peptide 1 of Caenorhabditis elegans.